Reading from the N-terminus, the 104-residue chain is Small ribosomal subunit protein uS10 (104 aa).

The protein belongs to the universal ribosomal protein uS10 family. In terms of assembly, part of the 30S ribosomal subunit.

In terms of biological role, involved in the binding of tRNA to the ribosomes. In Nitrosococcus oceani (strain ATCC 19707 / BCRC 17464 / JCM 30415 / NCIMB 11848 / C-107), this protein is Small ribosomal subunit protein uS10.